Consider the following 317-residue polypeptide: MQLQLISIVLILHFMEYTNCQHHGSRHRGNKQVSGVSSQGCQGGCQTCSVYNGCLTCKPKLFIHLERDGMRQIGVCLASCPNGFYGTRSPDRNDCIKCGSECDSCFNRNFCLRCRAGSYLHKGKCMESCPDGLVPSDTKKECVAACPALCDLCQNSDTCTRCVPGHFLHAGQCHHVCPDEFEPNDSMECIPTVHCEVSEWSEWGTCSRSGKTCGFKWGEETRTRKVLQNPSPMGSPCPPTSEKRECFVKKKRCKPPKGQRRGEKKKRFNLQEKVTAEARRERKREREKETIDREESENRNKTEQRRRRDQSRDAGTV.

The N-terminal stretch at 1-20 (MQLQLISIVLILHFMEYTNC) is a signal peptide. FU repeat units lie at residues 34-86 (SGVS…GFYG), 92-135 (RNDC…GLVP), and 139-183 (KKEC…EFEP). Cystine bridges form between C41–C48, C45–C54, C57–C76, C80–C95, C98–C105, C102–C111, C114–C125, C129–C189, C195–C237, C206–C213, and C246–C253. N-linked (GlcNAc...) asparagine glycosylation occurs at N184. One can recognise a TSP type-1 domain in the interval 194-254 (HCEVSEWSEW…ECFVKKKRCK (61 aa)). Positions 251–268 (KRCKPPKGQRRGEKKKRF) are enriched in basic residues. Residues 251-317 (KRCKPPKGQR…RDQSRDAGTV (67 aa)) are disordered. The span at 274 to 303 (VTAEARRERKREREKETIDREESENRNKTE) shows a compositional bias: basic and acidic residues. N300 carries an N-linked (GlcNAc...) asparagine glycan.

The protein belongs to the R-spondin family. As to quaternary structure, binds heparin.

The protein resides in the secreted. In terms of biological role, activator of the canonical Wnt signaling pathway by acting as a ligand for lgr4-6 receptors, which acts as a key regulator of angiogenesis. Upon binding to lgr4-6 (lgr4, lgr5 or lgr6), lgr4-6 associate with phosphorylated lrp6 and frizzled receptors that are activated by extracellular Wnt receptors, triggering the canonical Wnt signaling pathway to increase expression of target genes. Acts both in the canonical. Wnt/beta-catenin-dependent pathway and in non-canonical Wnt signaling pathway. Acts as a key regulator of angiogenesis by controlling vascular stability and pruning: acts by activating the non-canonical Wnt signaling pathway in endothelial cells. Can also amplify Wnt signaling pathway independently of LGR4-6 receptors, possibly by acting as a direct antagonistic ligand to RNF43 and ZNRF3. The chain is R-spondin-3 (rspo3) from Danio rerio (Zebrafish).